Here is a 126-residue protein sequence, read N- to C-terminus: C-type natriuretic peptide 2 (126 aa).

Positions 1–22 (MAVCSSSSLILLTVFLSVAVET) are cleaved as a signal peptide. Residues 23-102 (RPSSDRDEEQ…REKTRRWGRK (80 aa)) constitute a propeptide that is removed on maturation. Positions 44–80 (SLILAPPTSNDSTEGSSGSPEPPTPSEAPVLIHGDRG) are disordered. The cysteines at positions 110 and 126 are disulfide-linked.

The protein belongs to the natriuretic peptide family. As to expression, brain and spinal cord.

The protein resides in the secreted. In terms of biological role, exhibits natriuretic and vasodepressant activity. Has cGMP-stimulating activity. May help to regulate body fluid homeostasis in a variety of aquatic environments. In Oryzias latipes (Japanese rice fish), this protein is C-type natriuretic peptide 2.